A 283-amino-acid chain; its full sequence is Acetylglutamate kinase (283 aa).

Substrate contacts are provided by residues 63 to 64 (GG), Arg85, and Asn178.

Belongs to the acetylglutamate kinase family. ArgB subfamily.

It is found in the cytoplasm. It carries out the reaction N-acetyl-L-glutamate + ATP = N-acetyl-L-glutamyl 5-phosphate + ADP. The protein operates within amino-acid biosynthesis; L-arginine biosynthesis; N(2)-acetyl-L-ornithine from L-glutamate: step 2/4. Its function is as follows. Catalyzes the ATP-dependent phosphorylation of N-acetyl-L-glutamate. This is Acetylglutamate kinase from Prochlorococcus marinus (strain MIT 9301).